We begin with the raw amino-acid sequence, 302 residues long: Glutamyl-Q tRNA(Asp) synthetase (302 aa).

L-glutamate contacts are provided by residues Arg-13–Ser-17 and Asp-49. A 'HIGH' region motif is present at residues Pro-16 to Ser-26. The Zn(2+) site is built by Cys-105, Cys-107, Tyr-119, and Cys-123. Residues Tyr-178 and Arg-196 each coordinate L-glutamate. A 'KMSKS' region motif is present at residues Lys-234–Gln-238. Lys-237 provides a ligand contact to ATP.

This sequence belongs to the class-I aminoacyl-tRNA synthetase family. GluQ subfamily. Requires Zn(2+) as cofactor.

Functionally, catalyzes the tRNA-independent activation of glutamate in presence of ATP and the subsequent transfer of glutamate onto a tRNA(Asp). Glutamate is transferred on the 2-amino-5-(4,5-dihydroxy-2-cyclopenten-1-yl) moiety of the queuosine in the wobble position of the QUC anticodon. The polypeptide is Glutamyl-Q tRNA(Asp) synthetase (Methylococcus capsulatus (strain ATCC 33009 / NCIMB 11132 / Bath)).